The sequence spans 634 residues: NRPS-independent siderophore synthetase rfs (634 aa).

Its function is as follows. NRPS-independent siderophore synthetase that catalyzes the rhizoferrin biosynthesis from citrate and diaminobutane via an ATP-dependent condensation of citrate with diaminobutane followed by the addition of a second citrate to the monocitryl-diaminobutane intermediate. Can also use as substrates the citrate and diaminobutane homologs oxaloacetic acid, diaminopropane, diaminobutane, diaminopentane, tricarballylic acid, hydroxylamine and ornithine. Forms only a mono-substituted intermediate with oxaloacetic acid and diaminopentane whereas both mono-citryl intermediates and full rhizoferrin derivatives were detected when diaminopropane, and ornithine were used as substrates. Tricarballylic acid only forms a rhizoferrin derivative, but no mono-substituted intermediate. This is NRPS-independent siderophore synthetase rfs from Rhizopus delemar (strain RA 99-880 / ATCC MYA-4621 / FGSC 9543 / NRRL 43880) (Mucormycosis agent).